The chain runs to 360 residues: Arginase, non-hepatic 3 (360 aa).

His-122, Asp-145, His-147, and Asp-149 together coordinate Mn(2+). Substrate contacts are provided by residues 147–151, 158–160, and Asp-204; these read HADIN and SGN. Asp-253 and Asp-255 together coordinate Mn(2+). Substrate contacts are provided by Thr-267 and Glu-298.

The protein belongs to the arginase family. As to quaternary structure, homotrimer. It depends on Mn(2+) as a cofactor. In terms of tissue distribution, expressed at differing tadpole stages in tail, intestine, hindlimb and trunk region. Strongest in tadpole tail.

The catalysed reaction is L-arginine + H2O = urea + L-ornithine. It functions in the pathway nitrogen metabolism; urea cycle; L-ornithine and urea from L-arginine: step 1/1. Functionally, as well as its role in the urea cycle, may be involved in tissue remodeling. The protein is Arginase, non-hepatic 3 (arg2-c) of Xenopus laevis (African clawed frog).